Consider the following 143-residue polypeptide: Large ribosomal subunit protein uL11 (143 aa).

It belongs to the universal ribosomal protein uL11 family. Part of the ribosomal stalk of the 50S ribosomal subunit. Interacts with L10 and the large rRNA to form the base of the stalk. L10 forms an elongated spine to which L12 dimers bind in a sequential fashion forming a multimeric L10(L12)X complex. In terms of processing, one or more lysine residues are methylated.

Its function is as follows. Forms part of the ribosomal stalk which helps the ribosome interact with GTP-bound translation factors. The protein is Large ribosomal subunit protein uL11 of Paenarthrobacter aurescens (strain TC1).